A 348-amino-acid chain; its full sequence is Protein RecA (348 aa).

ATP is bound at residue 67–74 (GPESSGKT).

This sequence belongs to the RecA family.

The protein resides in the cytoplasm. In terms of biological role, can catalyze the hydrolysis of ATP in the presence of single-stranded DNA, the ATP-dependent uptake of single-stranded DNA by duplex DNA, and the ATP-dependent hybridization of homologous single-stranded DNAs. It interacts with LexA causing its activation and leading to its autocatalytic cleavage. This is Protein RecA from Salinispora tropica (strain ATCC BAA-916 / DSM 44818 / JCM 13857 / NBRC 105044 / CNB-440).